The primary structure comprises 141 residues: HTH-type transcriptional regulator MntR (141 aa).

Positions 1–63 constitute an HTH dtxR-type domain; the sequence is MPTPSMEDYI…YEKYRGLVLT (63 aa). Mn(2+)-binding residues include D8, E11, H77, E99, E102, and H103.

It belongs to the DtxR/MntR family. In terms of assembly, homodimer.

Its subcellular location is the cytoplasm. With respect to regulation, DNA binding is strongly activated by Mn(2+). Its function is as follows. Central regulator of manganese homeostasis. In Geobacillus kaustophilus (strain HTA426), this protein is HTH-type transcriptional regulator MntR.